The primary structure comprises 236 residues: Purine nucleoside phosphorylase DeoD-type (236 aa).

Residue His-4 participates in a purine D-ribonucleoside binding. Residues Gly-20, Arg-24, Arg-43, and 87–90 (RVGS) each bind phosphate. A purine D-ribonucleoside is bound by residues 179–181 (EME) and 203–204 (SD). The Proton donor role is filled by Asp-204.

The protein belongs to the PNP/UDP phosphorylase family. Homohexamer; trimer of homodimers.

It catalyses the reaction a purine D-ribonucleoside + phosphate = a purine nucleobase + alpha-D-ribose 1-phosphate. It carries out the reaction a purine 2'-deoxy-D-ribonucleoside + phosphate = a purine nucleobase + 2-deoxy-alpha-D-ribose 1-phosphate. Catalyzes the reversible phosphorolytic breakdown of the N-glycosidic bond in the beta-(deoxy)ribonucleoside molecules, with the formation of the corresponding free purine bases and pentose-1-phosphate. In Limosilactobacillus reuteri (strain DSM 20016) (Lactobacillus reuteri), this protein is Purine nucleoside phosphorylase DeoD-type.